Reading from the N-terminus, the 1112-residue chain is Patronin (microtubule-binding protein) homolog (1112 aa).

Residues 165–286 (IDSVDALLFW…VNAFLADLFV (122 aa)) form the Calponin-homology (CH) domain. 4 disordered regions span residues 324–358 (AARS…SRMS), 485–504 (EGED…QPSV), 542–566 (MQQQ…PSQL), and 788–834 (NHSE…GSGE). 2 stretches are compositionally biased toward polar residues: residues 345 to 358 (SHSQ…SRMS) and 489 to 504 (GTQS…QPSV). Residues 542 to 557 (MQQQMQQQQQQQAQAQ) show a composition bias toward low complexity. The span at 802-816 (QNDRDDLSTGRKSDD) shows a compositional bias: basic and acidic residues. Residues 850-914 (ALIAKTMKRK…YKRKKLEKEL (65 aa)) adopt a coiled-coil conformation. Positions 916 to 965 (AELSARSTGRGHSQPPFIRTKSQMSEVTESSRQNTPRMRGQSSVEQRVSV) are disordered. Positions 935 to 951 (TKSQMSEVTESSRQNTP) are enriched in polar residues. Residues 956–965 (QSSVEQRVSV) are compositionally biased toward low complexity. Positions 972–1109 (THKLYAKTVT…RIPHSGTPAH (138 aa)) constitute a CKK domain.

It belongs to the CAMSAP1 family. Interacts with dapk-1. As to expression, expressed in larval and adult epidermis, intestine and pharynx. Broadly expressed in the nervous system. Expressed in body wall muscle cells.

It localises to the cell projection. It is found in the axon. Its subcellular location is the dendrite. The protein resides in the cell membrane. The protein localises to the sarcolemma. It localises to the cytoplasm. It is found in the cytosol. Its subcellular location is the cytoskeleton. The protein resides in the perikaryon. Functionally, required for microtubule stability and anchorage by binding to the minus ends of microtubules. Acts redundantly with noca-1 to control circumferential microtubule assembly along the body which is necessary for larval development, viability, morphology and integrity of the epidermis. Promotes microtubule stability and polymerization in neurons. Involved in the maintenance of neurite morphology in ALM and PLM neurons. May play a role in synaptic protein localization in the PLM neuron. May act upstream of dlk-1 in neuronal regeneration. Plays a role in postembryonic epidermal tissue integrity and wound healing. This is Patronin (microtubule-binding protein) homolog from Caenorhabditis elegans.